We begin with the raw amino-acid sequence, 136 residues long: Ribosome-binding factor A (136 aa).

Belongs to the RbfA family. As to quaternary structure, monomer. Binds 30S ribosomal subunits, but not 50S ribosomal subunits or 70S ribosomes.

Its subcellular location is the cytoplasm. One of several proteins that assist in the late maturation steps of the functional core of the 30S ribosomal subunit. Associates with free 30S ribosomal subunits (but not with 30S subunits that are part of 70S ribosomes or polysomes). Required for efficient processing of 16S rRNA. May interact with the 5'-terminal helix region of 16S rRNA. The polypeptide is Ribosome-binding factor A (Yersinia enterocolitica serotype O:8 / biotype 1B (strain NCTC 13174 / 8081)).